Here is a 104-residue protein sequence, read N- to C-terminus: Large ribosomal subunit protein bL21 (104 aa).

Residues 78-91 (KRRRQNSRRKRGHR) are compositionally biased toward basic residues. Positions 78–104 (KRRRQNSRRKRGHRQDHTVVRITGISA) are disordered.

The protein belongs to the bacterial ribosomal protein bL21 family. As to quaternary structure, part of the 50S ribosomal subunit. Contacts protein L20.

Its function is as follows. This protein binds to 23S rRNA in the presence of protein L20. This chain is Large ribosomal subunit protein bL21, found in Methylobacterium radiotolerans (strain ATCC 27329 / DSM 1819 / JCM 2831 / NBRC 15690 / NCIMB 10815 / 0-1).